The sequence spans 236 residues: Ureidoacrylate amidohydrolase RutB (236 aa).

Asp-24 serves as the catalytic Proton acceptor. The active site involves Lys-133. The active-site Nucleophile is Cys-166.

This sequence belongs to the isochorismatase family. RutB subfamily.

It carries out the reaction (Z)-3-ureidoacrylate + H2O + H(+) = (Z)-3-aminoacrylate + NH4(+) + CO2. The enzyme catalyses (Z)-3-ureidoacrylate + H2O = (Z)-3-aminoacrylate + carbamate + H(+). The catalysed reaction is (Z)-2-methylureidoacrylate + H2O + H(+) = (Z)-2-methylaminoacrylate + NH4(+) + CO2. Functionally, hydrolyzes ureidoacrylate to form aminoacrylate and carbamate. The carbamate hydrolyzes spontaneously, thereby releasing one of the nitrogen atoms of the pyrimidine ring as ammonia and one of its carbon atoms as CO2. The chain is Ureidoacrylate amidohydrolase RutB from Klebsiella variicola (strain At-22).